We begin with the raw amino-acid sequence, 181 residues long: Putative manganese efflux pump MntP (181 aa).

Helical transmembrane passes span 5-25 (LIAL…IALG), 36-56 (MFKV…MGMV), 66-86 (GLFA…VMIV), 102-122 (IGLF…GLSL), 130-150 (ALAV…GLFI), and 158-178 (VGPY…VKLL).

It belongs to the MntP (TC 9.B.29) family.

Its subcellular location is the cell membrane. Functionally, probably functions as a manganese efflux pump. The chain is Putative manganese efflux pump MntP from Halalkalibacterium halodurans (strain ATCC BAA-125 / DSM 18197 / FERM 7344 / JCM 9153 / C-125) (Bacillus halodurans).